Reading from the N-terminus, the 262-residue chain is Small ribosomal subunit protein eS4 (262 aa).

In terms of domain architecture, S4 RNA-binding spans 42–104 (LPLILILRNR…TNEDFRLLYD (63 aa)).

It belongs to the eukaryotic ribosomal protein eS4 family.

The protein localises to the cytoplasm. The polypeptide is Small ribosomal subunit protein eS4 (RPS4) (Gossypium hirsutum (Upland cotton)).